A 1111-amino-acid polypeptide reads, in one-letter code: Nuclear migration and anchoring protein unc-84 (1111 aa).

Residues 1–509 (MAPATEADNN…LTDKKSSKFS (509 aa)) lie on the Nuclear side of the membrane. Required for nuclear envelope localization regions lie at residues 118-244 (YILR…SQTL) and 503-507 (KKSSK). The tract at residues 232 to 253 (ERASRMTTRSQTLERSRKFDGL) is disordered. Over residues 243 to 252 (TLERSRKFDG) the composition is skewed to basic and acidic residues. A helical transmembrane segment spans residues 510–530 (WCQILGLLLALLFAIFLLGFL). At 531 to 1111 (TSDNTAIRVK…LRVHGKVVQV (581 aa)) the chain is on the perinuclear space side. Residues 912–1111 (QYDKNHLEAI…LRVHGKVVQV (200 aa)) form an interaction with zyg-12 region. The SUN domain occupies 945-1109 (GGAVVSTRCS…YRLRVHGKVV (165 aa)).

As to quaternary structure, component of the unc-83-unc-84 LINC complex which contains at least unc-83 and unc-84. Within the unc-83-unc-84 LINC complex interacts (via C-terminus) with unc-83; the interaction is probably required to recruit unc-83 to the nuclear membrane. Most likely interacts with anc-1; the interaction is probably required to recruit anc-1 to the nuclear envelope. Interacts (via C-terminus) with zyg-12 (via C-terminus); the interaction is direct. May interact with lmn-1; this interaction may be required to complete the connection between the nuclear lamina and the cytoskeleton. As to expression, expressed in all somatic cells. Not expressed in germ cells in the mitotic and transition zones of the gonad. One study shows expression at the beginning of the late pachytene stage in the proximal gonad, but there is no expression in the male germline, suggesting expression is specific to oogenesis in hermaphrodites.

Its subcellular location is the nucleus inner membrane. It localises to the cytoplasm. The protein resides in the cytoskeleton. Functionally, involved in nuclear migration and anchoring in hypodermal precursor cells. Most likely recruits anc-1 to the nuclear envelope where anc-1 functions to tether the nucleus to the actin cytoskeleton. Component of the unc-83-unc-84 LINC (LInker of Nucleoskeleton and Cytoskeleton) complex where it recruits and interacts with unc-83 to form a bridge connecting the nuclear envelope to the cytoskeleton which allows for nuclear transport along microtubules. Its role in nuclear migration may be in association with lamin, lmn-1. Regulates nuclear migrations in one-cell embryos, controlling the posterior migration of the male pronucleus following fertilization. Not required for centrosome attachment to the nucleus. Plays a role in the maintenance of the nuclear envelope architecture in body wall muscle cells. May be involved in DNA damage repair through an association with zyg-12. Potentially has roles in homologous recombination, double strand break repair and meiotic recombination. Specifically, may in part inhibit non-homologous end joining repair, most likely through recruiting fan-1 to the nucleoplasm, to facilitate the repair of DNA cross-links. This is Nuclear migration and anchoring protein unc-84 from Caenorhabditis elegans.